The chain runs to 119 residues: Holo-[acyl-carrier-protein] synthase (119 aa).

The Mg(2+) site is built by aspartate 2 and glutamate 51.

It belongs to the P-Pant transferase superfamily. AcpS family. Mg(2+) is required as a cofactor.

The protein localises to the cytoplasm. It catalyses the reaction apo-[ACP] + CoA = holo-[ACP] + adenosine 3',5'-bisphosphate + H(+). Functionally, transfers the 4'-phosphopantetheine moiety from coenzyme A to a Ser of acyl-carrier-protein. The protein is Holo-[acyl-carrier-protein] synthase of Chlorobium luteolum (strain DSM 273 / BCRC 81028 / 2530) (Pelodictyon luteolum).